Consider the following 606-residue polypeptide: Leucine-rich repeat and immunoglobulin-like domain-containing nogo receptor-interacting protein 2 (606 aa).

An N-terminal signal peptide occupies residues Met1–Gly27. The 30-residue stretch at Cys28 to Ile57 folds into the LRRNT domain. Residues Cys28–Thr545 are Extracellular-facing. N-linked (GlcNAc...) asparagine glycosylation occurs at Asn38. LRR repeat units lie at residues Glu58–Ser79, Leu82–Asn103, Asn106–Gly127, Asn130–Asp151, Asn154–Gly175, Ser178–His199, Ser202–Arg223, His226–Tyr247, Asn250–His271, Tyr274–Asp295, Arg298–Gly319, and Phe322–Ser343. N-linked (GlcNAc...) asparagine glycosylation occurs at Asn130. An N-linked (GlcNAc...) asparagine glycan is attached at Asn188. N-linked (GlcNAc...) asparagine glycosylation is present at Asn279. Asn327 carries N-linked (GlcNAc...) asparagine glycosylation. Residues Asn355–Lys409 form the LRRCT domain. Residues Pro410–Thr499 enclose the Ig-like C2-type domain. An intrachain disulfide couples Cys432 to Cys483. A helical transmembrane segment spans residues Ala546–Trp566. At Ser567 to Ile606 the chain is on the cytoplasmic side.

The protein localises to the membrane. This chain is Leucine-rich repeat and immunoglobulin-like domain-containing nogo receptor-interacting protein 2 (LINGO2), found in Homo sapiens (Human).